A 1898-amino-acid polypeptide reads, in one-letter code: Protein NYNRIN (1898 aa).

5 disordered regions span residues 289–315 (SNNQ…STNH), 424–450 (LPSA…CPRP), 467–533 (DVKD…TDQS), 618–691 (EPTT…TDAG), and 711–731 (VSLL…SGTL). Residues 618–627 (EPTTPKTPQA) show a composition bias toward polar residues. The span at 649–672 (PAATVSKAPAASKAPAAPKVPVTP) shows a compositional bias: low complexity. The region spanning 792 to 942 (LRRVVIDGSS…LGRDGPTLDE (151 aa)) is the RNase NYN domain. The interval 968–1019 (SASVTELSDDADSGPLESLPNMEEVREEKEERQDEEQRQGQGTQKAAEEDDL) is disordered. Residues 990–1005 (EEVREEKEERQDEEQR) show a composition bias toward basic and acidic residues. In terms of domain architecture, RNase H type-1 spans 1304–1450 (LSTFVCIHMS…VDTLAKQGAQ (147 aa)). 2 helical membrane passes run 1372 to 1392 (VVFL…LPLW) and 1408 to 1428 (PSLL…PFIY). Residues 1609-1774 (RSTAPWSNLQ…ESRLTEPLWW (166 aa)) form the Integrase catalytic domain.

The protein localises to the membrane. This is Protein NYNRIN (NYNRIN) from Homo sapiens (Human).